The following is a 331-amino-acid chain: ADP-L-glycero-D-manno-heptose-6-epimerase (331 aa).

Residues 11-12 (FI), 32-33 (DN), Lys-39, Lys-54, 75-79 (LGACT), and Asn-92 contribute to the NADP(+) site. The active-site Proton acceptor is the Tyr-139. Lys-143 is a binding site for NADP(+). Asn-168 contacts substrate. Positions 169 and 177 each coordinate NADP(+). The Proton acceptor role is filled by Lys-177. Substrate-binding positions include Arg-179, Gln-186, 200-203 (FGEH), His-213, and Tyr-292.

It belongs to the NAD(P)-dependent epimerase/dehydratase family. HldD subfamily. In terms of assembly, homopentamer. Requires NADP(+) as cofactor.

It catalyses the reaction ADP-D-glycero-beta-D-manno-heptose = ADP-L-glycero-beta-D-manno-heptose. It participates in nucleotide-sugar biosynthesis; ADP-L-glycero-beta-D-manno-heptose biosynthesis; ADP-L-glycero-beta-D-manno-heptose from D-glycero-beta-D-manno-heptose 7-phosphate: step 4/4. Functionally, catalyzes the interconversion between ADP-D-glycero-beta-D-manno-heptose and ADP-L-glycero-beta-D-manno-heptose via an epimerization at carbon 6 of the heptose. The chain is ADP-L-glycero-D-manno-heptose-6-epimerase from Cupriavidus pinatubonensis (strain JMP 134 / LMG 1197) (Cupriavidus necator (strain JMP 134)).